The chain runs to 190 residues: NADH-quinone oxidoreductase subunit B (190 aa).

4 residues coordinate [4Fe-4S] cluster: C39, C40, C104, and C135.

It belongs to the complex I 20 kDa subunit family. As to quaternary structure, NDH-1 is composed of 14 different subunits. Subunits NuoB, C, D, E, F, and G constitute the peripheral sector of the complex. It depends on [4Fe-4S] cluster as a cofactor.

The protein localises to the cell inner membrane. The enzyme catalyses a quinone + NADH + 5 H(+)(in) = a quinol + NAD(+) + 4 H(+)(out). Functionally, NDH-1 shuttles electrons from NADH, via FMN and iron-sulfur (Fe-S) centers, to quinones in the respiratory chain. The immediate electron acceptor for the enzyme in this species is believed to be a menaquinone. Couples the redox reaction to proton translocation (for every two electrons transferred, four hydrogen ions are translocated across the cytoplasmic membrane), and thus conserves the redox energy in a proton gradient. The polypeptide is NADH-quinone oxidoreductase subunit B (Prosthecochloris aestuarii (strain DSM 271 / SK 413)).